Reading from the N-terminus, the 213-residue chain is Adenylate kinase (213 aa).

10-15 contacts ATP; sequence GCGKGT. An NMP region spans residues 30–59; it reads STGDLMRKEISLNTRLGLKCQEYMNAGKYV. Residues T31, R36, 57 to 59, 83 to 86, and Q90 each bind AMP; these read KYV and GYPR. The segment at 124-161 is LID; sequence NRLVCPLCKASFNLETRKPKQEGLCDFDNTKLVKRSDD. An ATP-binding site is contributed by R125. The Zn(2+) site is built by C128 and C131. 134–135 is an ATP binding site; that stretch reads SF. Positions 148 and 151 each coordinate Zn(2+). AMP-binding residues include R158 and R169. Residue D197 coordinates ATP.

The protein belongs to the adenylate kinase family. As to quaternary structure, monomer.

The protein localises to the cytoplasm. It catalyses the reaction AMP + ATP = 2 ADP. The protein operates within purine metabolism; AMP biosynthesis via salvage pathway; AMP from ADP: step 1/1. In terms of biological role, catalyzes the reversible transfer of the terminal phosphate group between ATP and AMP. Plays an important role in cellular energy homeostasis and in adenine nucleotide metabolism. The protein is Adenylate kinase of Mycoplasma mycoides subsp. mycoides SC (strain CCUG 32753 / NCTC 10114 / PG1).